A 495-amino-acid chain; its full sequence is Sulfhydryl oxidase 2 (495 aa).

The signal sequence occupies residues 1-15 (MSLVHLLLFAGLVIA). One can recognise a Thioredoxin domain in the interval 29-164 (EISDQKDKAV…LLNWINKQIG (136 aa)). Residue N41 is glycosylated (N-linked (GlcNAc...) asparagine). Catalysis depends on nucleophile residues C66 and C69. A disulfide bridge links C66 with C69. N-linked (GlcNAc...) asparagine glycans are attached at residues N182, N257, N266, and N292. Cysteines 287 and 299 form a disulfide. The 103-residue stretch at 290 to 392 (SKNDTRGFSC…GDPKFPKIIW (103 aa)) folds into the ERV/ALR sulfhydryl oxidase domain. Residues R295, W302, H306, E336, H340, 363–370 (WSTHNKVN), K389, and W392 contribute to the FAD site. A disulfide bridge links C334 with C337. Cysteines 398 and 401 form a disulfide.

FAD serves as cofactor.

It localises to the secreted. It catalyses the reaction 2 R'C(R)SH + O2 = R'C(R)S-S(R)CR' + H2O2. Its function is as follows. Catalyzes the oxidation of sulfhydryl groups in peptide and protein thiols to disulfides with the reduction of oxygen to hydrogen peroxide. May contribute to disulfide bond formation in a variety of secreted proteins. The protein is Sulfhydryl oxidase 2 (QSOX2) of Arabidopsis thaliana (Mouse-ear cress).